We begin with the raw amino-acid sequence, 332 residues long: Adenosine deaminase (332 aa).

Residues His-12 and His-14 each coordinate Zn(2+). Residues His-14, Asp-16, and Gly-169 each coordinate substrate. His-196 provides a ligand contact to Zn(2+). The Proton donor role is filled by Glu-199. Asp-277 contacts Zn(2+).

Belongs to the metallo-dependent hydrolases superfamily. Adenosine and AMP deaminases family. Adenosine deaminase subfamily. Requires Zn(2+) as cofactor.

The enzyme catalyses adenosine + H2O + H(+) = inosine + NH4(+). It catalyses the reaction 2'-deoxyadenosine + H2O + H(+) = 2'-deoxyinosine + NH4(+). Catalyzes the hydrolytic deamination of adenosine and 2-deoxyadenosine. This is Adenosine deaminase from Vibrio atlanticus (strain LGP32) (Vibrio splendidus (strain Mel32)).